Reading from the N-terminus, the 692-residue chain is Elongation factor G (692 aa).

The tr-type G domain maps to 8–282 (EKTRNIGIMA…AIVDFLPAPT (275 aa)). Residues 17-24 (AHIDAGKT), 81-85 (DTPGH), and 135-138 (NKMD) each bind GTP.

It belongs to the TRAFAC class translation factor GTPase superfamily. Classic translation factor GTPase family. EF-G/EF-2 subfamily.

It localises to the cytoplasm. Functionally, catalyzes the GTP-dependent ribosomal translocation step during translation elongation. During this step, the ribosome changes from the pre-translocational (PRE) to the post-translocational (POST) state as the newly formed A-site-bound peptidyl-tRNA and P-site-bound deacylated tRNA move to the P and E sites, respectively. Catalyzes the coordinated movement of the two tRNA molecules, the mRNA and conformational changes in the ribosome. This chain is Elongation factor G, found in Moorella thermoacetica (strain ATCC 39073 / JCM 9320).